The sequence spans 290 residues: Fructose-1,6-bisphosphatase class 1 (290 aa).

Mg(2+)-binding residues include Glu-78, Asp-96, Leu-98, and Asp-99. Residues Asp-99–Ser-102, Tyr-201, and Lys-226 contribute to the substrate site. Residue Glu-232 participates in Mg(2+) binding.

It belongs to the FBPase class 1 family. As to quaternary structure, homotetramer. Mg(2+) is required as a cofactor.

It localises to the cytoplasm. It catalyses the reaction beta-D-fructose 1,6-bisphosphate + H2O = beta-D-fructose 6-phosphate + phosphate. Its pathway is carbohydrate biosynthesis; gluconeogenesis. The protein is Fructose-1,6-bisphosphatase class 1 of Helicobacter pylori (strain ATCC 700392 / 26695) (Campylobacter pylori).